The primary structure comprises 90 residues: Lectin-1 (90 aa).

Gln1 bears the Pyrrolidone carboxylic acid mark. Cysteines 46 and 71 form a disulfide.

The N-terminus is blocked. Post-translationally, contains seven disulfide bonds. In terms of processing, proteolytically cleaved. Major form may consist of cleaved, disulfide-bonded subunits.

Its function is as follows. Lectin with specificity for complex N-linked glycans and O-linked glycans. Has hemagglutinating activity towards rabbit erythrocytes that is inhibited by N-acetyl-D-galactosamine. This Hypnea cervicornis (Brazilian red alga) protein is Lectin-1.